The sequence spans 326 residues: Ras association domain-containing protein 2 (326 aa).

One can recognise a Ras-associating domain in the interval 176–264 (YNHKTSVFTP…SKVFLMEKDQ (89 aa)). The region spanning 272-319 (VAQYIKFEMPVLKSFIQKLQEEEDREVEKLMRKYTVLRLMIRQRLEEI) is the SARAH domain.

In terms of assembly, interacts directly with activated KRAS in a GTP-dependent manner. Interacts (via SARAH domain) with STK3/MST2 and STK4/MST1. Post-translationally, phosphorylated by STK3/MST2 and STK4/MST1.

It localises to the nucleus. It is found in the cytoplasm. Its subcellular location is the chromosome. The protein resides in the centromere. The protein localises to the kinetochore. In terms of biological role, potential tumor suppressor. Acts as a KRAS-specific effector protein. May promote apoptosis and cell cycle arrest. Stabilizes STK3/MST2 by protecting it from proteasomal degradation. The chain is Ras association domain-containing protein 2 (Rassf2) from Mus musculus (Mouse).